Reading from the N-terminus, the 562-residue chain is MGDISAATKAPAPPTPATPETNTTSSSSDTDVQHEPQIPSAASRNLVIFALGLAILVGVLDATIVATLVPTIADDFHSVDSSAWYGSAYLLVTGATQPIFGKIYSTFQSKLVFLSSVAILEVGSLVCALAKNSPTFIGGRAIAGLGAAGVISGGLIITALTTPLKQRPVYTAILGSLEGVGVIIGPIIGGQIASSIGWRWCFWINLPIGAVLCAILVFCLHPPKQTPEREQEQAGKTWTQKLAQLDLEGGLAIAGSITCLLLALEWGGTSYPWSDGRIIVLLVVFGVSLICVAVHQHWKGEAATFPTRLLKNRTFSMFLLCGLCFAGAQFTVLYYLPMWFQAVQGVSAAESGTRLLAMVVSVIVVSVIAGGSAGAVGYLPPFVFFATIFSSIGAGMLYTLHPSISKSKWIGYQILFGAGSGTGIQQAIVGVQVAVDHDDMAYATSAVMLVNTLAGSIFIAVSQTLFLGEMKRVTELIPNLDRHTLLSNFRSIRDKLDHQELDIAVNAYNRGITKAFLIGLVLCSITVLTWPLIRWIPLKKTEDPVKSERRNDPETLNAGNVA.

Composition is skewed to low complexity over residues 1-10 (MGDISAATKA) and 18-30 (TPETNTTSSSSDT). The interval 1–36 (MGDISAATKAPAPPTPATPETNTTSSSSDTDVQHEP) is disordered. A glycan (N-linked (GlcNAc...) asparagine) is linked at asparagine 22. The next 8 helical transmembrane spans lie at 46–66 (LVIFALGLAILVGVLDATIVA), 83–103 (AWYGSAYLLVTGATQPIFGKI), 110–130 (KLVFLSSVAILEVGSLVCALA), 141–161 (AIAGLGAAGVISGGLIITALT), 169–189 (VYTAILGSLEGVGVIIGPIIG), 200–220 (WCFWINLPIGAVLCAILVFCL), 249–269 (GGLAIAGSITCLLLALEWGGT), and 278–298 (IIVLLVVFGVSLICVAVHQHW). The N-linked (GlcNAc...) asparagine glycan is linked to asparagine 312. A run of 6 helical transmembrane segments spans residues 317 to 337 (MFLLCGLCFAGAQFTVLYYLP), 356 to 376 (LAMVVSVIVVSVIAGGSAGAV), 382 to 404 (FVFFATIFSSIGAGMLYTLHPSI), 414 to 434 (ILFGAGSGTGIQQAIVGVQVA), 447 to 467 (VMLVNTLAGSIFIAVSQTLFL), and 516 to 536 (FLIGLVLCSITVLTWPLIRWI).

Belongs to the major facilitator superfamily. TCR/Tet family.

The protein resides in the membrane. The protein operates within secondary metabolite biosynthesis. Efflux pump; part of the gene cluster that mediates the biosynthesis of the cyclic tetrapeptide apicidin F (APF). The protein is Efflux pump apf11 (apf11) of Gibberella fujikuroi (strain CBS 195.34 / IMI 58289 / NRRL A-6831) (Bakanae and foot rot disease fungus).